The sequence spans 201 residues: Large ribosomal subunit protein uL4 (201 aa).

The disordered stretch occupies residues 42–67; the sequence is GNSAQKTRSEVSGGGKKPWNQKGTGR.

It belongs to the universal ribosomal protein uL4 family. Part of the 50S ribosomal subunit.

One of the primary rRNA binding proteins, this protein initially binds near the 5'-end of the 23S rRNA. It is important during the early stages of 50S assembly. It makes multiple contacts with different domains of the 23S rRNA in the assembled 50S subunit and ribosome. In terms of biological role, forms part of the polypeptide exit tunnel. The polypeptide is Large ribosomal subunit protein uL4 (Legionella pneumophila (strain Corby)).